Consider the following 218-residue polypeptide: Guanylate kinase (218 aa).

Residues 5–188 enclose the Guanylate kinase-like domain; sequence GNLFILSAPS…ALLDLTTIVN (184 aa). Residue 12–19 coordinates ATP; sequence APSGAGKS.

It belongs to the guanylate kinase family.

The protein resides in the cytoplasm. It carries out the reaction GMP + ATP = GDP + ADP. Essential for recycling GMP and indirectly, cGMP. In Colwellia psychrerythraea (strain 34H / ATCC BAA-681) (Vibrio psychroerythus), this protein is Guanylate kinase.